We begin with the raw amino-acid sequence, 479 residues long: Type I inositol polyphosphate 5-phosphatase 8 (479 aa).

2 catalytic regions span residues 300–315 (DKVI…LRAS) and 379–394 (KRRT…WKGD).

This sequence belongs to the inositol polyphosphate 5-phosphatase family.

The protein is Type I inositol polyphosphate 5-phosphatase 8 of Arabidopsis thaliana (Mouse-ear cress).